A 264-amino-acid polypeptide reads, in one-letter code: Thymidylate synthase (264 aa).

Arg21 lines the dUMP pocket. (6R)-5,10-methylene-5,6,7,8-tetrahydrofolate is bound at residue His51. 126-127 (RR) contacts dUMP. Cys146 functions as the Nucleophile in the catalytic mechanism. Residues 166–169 (RSVD), Asn177, and 207–209 (HLY) each bind dUMP. Residue Asp169 coordinates (6R)-5,10-methylene-5,6,7,8-tetrahydrofolate. Residue Ala263 participates in (6R)-5,10-methylene-5,6,7,8-tetrahydrofolate binding.

It belongs to the thymidylate synthase family. Bacterial-type ThyA subfamily. Homodimer.

The protein localises to the cytoplasm. It carries out the reaction dUMP + (6R)-5,10-methylene-5,6,7,8-tetrahydrofolate = 7,8-dihydrofolate + dTMP. Its pathway is pyrimidine metabolism; dTTP biosynthesis. In terms of biological role, catalyzes the reductive methylation of 2'-deoxyuridine-5'-monophosphate (dUMP) to 2'-deoxythymidine-5'-monophosphate (dTMP) while utilizing 5,10-methylenetetrahydrofolate (mTHF) as the methyl donor and reductant in the reaction, yielding dihydrofolate (DHF) as a by-product. This enzymatic reaction provides an intracellular de novo source of dTMP, an essential precursor for DNA biosynthesis. This chain is Thymidylate synthase, found in Geobacillus thermodenitrificans (strain NG80-2).